The chain runs to 241 residues: Uracil-DNA glycosylase (241 aa).

Asp-71 functions as the Proton acceptor in the catalytic mechanism.

Belongs to the uracil-DNA glycosylase (UDG) superfamily. UNG family.

The protein localises to the cytoplasm. The enzyme catalyses Hydrolyzes single-stranded DNA or mismatched double-stranded DNA and polynucleotides, releasing free uracil.. Excises uracil residues from the DNA which can arise as a result of misincorporation of dUMP residues by DNA polymerase or due to deamination of cytosine. In Xanthomonas axonopodis pv. citri (strain 306), this protein is Uracil-DNA glycosylase.